A 199-amino-acid chain; its full sequence is Tumor protein p53-inducible nuclear protein 2 (199 aa).

Positions 26 to 41 match the LIR motif; it reads VSEEDEVDGWLIIDLQ. Disordered regions lie at residues 41 to 69, 117 to 153, and 173 to 199; these read QDSYTAPPDPRASPAPAGRPPPAPSLMDE, LESGPPSPHPEAALPDQDLSDGELAPARREPRALHHA, and LQRARQRAERHTLSAKVLQRQNRARES. Pro residues predominate over residues 47–64; that stretch reads PPDPRASPAPAGRPPPAP. S136 bears the Phosphoserine mark.

As to quaternary structure, interacts with VMP1, GABARAP, GABARAPL1, GABARAPL2, MAP1LC3A, MAP1LC3B, MAP1LC3C and THRA. Abundantly expressed in skeletal muscle and heart and expression is highly repressed in muscle from obese diabetic rats.

The protein resides in the cytoplasm. The protein localises to the cytosol. Its subcellular location is the nucleus. It localises to the PML body. It is found in the cytoplasmic vesicle. The protein resides in the autophagosome. Dual regulator of transcription and autophagy. Positively regulates autophagy and is required for autophagosome formation and processing. May act as a scaffold protein that recruits MAP1LC3A, GABARAP and GABARAPL2 and brings them to the autophagosome membrane by interacting with VMP1 where, in cooperation with the BECN1-PI3-kinase class III complex, they trigger autophagosome development. Acts as a transcriptional activator of THRA. This is Tumor protein p53-inducible nuclear protein 2 (Tp53inp2) from Rattus norvegicus (Rat).